A 314-amino-acid chain; its full sequence is Secreted frizzled-related protein 1 (314 aa).

The signal sequence occupies residues 1–31; it reads MGVGRSEGGRRGAALGVLLALGVALLAVGSA. The FZ domain maps to 53 to 169; the sequence is TKPHQCVAIP…FPQDYVCIAM (117 aa). 5 cysteine pairs are disulfide-bonded: Cys-58–Cys-121, Cys-68–Cys-114, Cys-105–Cys-140, Cys-129–Cys-166, and Cys-133–Cys-157. Asn-173 carries an N-linked (GlcNAc...) asparagine glycan. Disulfide bonds link Cys-186/Cys-256, Cys-189/Cys-258, and Cys-203/Cys-306. The NTR domain occupies 186–306; the sequence is CPPCDNEMKS…FMKKVKAPDC (121 aa).

It belongs to the secreted frizzled-related protein (sFRP) family.

The protein localises to the secreted. Soluble frizzled-related proteins (sFRPS) function as modulators of Wnt signaling through direct interaction with Wnts. They have a role in regulating cell growth and differentiation in specific cell types. The chain is Secreted frizzled-related protein 1 (SFRP1) from Gallus gallus (Chicken).